Here is a 156-residue protein sequence, read N- to C-terminus: Keratin-associated protein 13-4 (156 aa).

4 tandem repeats follow at residues 37 to 46 (CQLGSSLYRN), 47 to 56 (CQKTCWEPTS), 57 to 66 (CRKSCYRRRT), and 73 to 82 (CQTTCSRSLG). Residues 37-82 (CQLGSSLYRNCQKTCWEPTSCRKSCYRRRTSMLCSPCQTTCSRSLG) form a 4 X 10 AA approximate repeats region.

Belongs to the PMG family. In terms of assembly, interacts with hair keratins.

In terms of biological role, in the hair cortex, hair keratin intermediate filaments are embedded in an interfilamentous matrix, consisting of hair keratin-associated proteins (KRTAP), which are essential for the formation of a rigid and resistant hair shaft through their extensive disulfide bond cross-linking with abundant cysteine residues of hair keratins. The matrix proteins include the high-sulfur and high-glycine-tyrosine keratins. This Macaca fascicularis (Crab-eating macaque) protein is Keratin-associated protein 13-4 (KRTAP13-4).